Reading from the N-terminus, the 229-residue chain is Prolactin (229 aa).

The N-terminal stretch at 1–30 is a signal peptide; that stretch reads MDKKGWSLKGSLLPLLLLVSDLLLCQSVAS. An intrachain disulfide couples C34 to C41. Phosphoserine is present on residues S56, S64, and S120. 2 disulfide bridges follow: C88-C204 and C221-C229.

It belongs to the somatotropin/prolactin family. Interacts with PRLR.

Its subcellular location is the secreted. Prolactin acts primarily on the mammary gland by promoting lactation. In Ailuropoda melanoleuca (Giant panda), this protein is Prolactin (PRL).